The primary structure comprises 349 residues: Putative ABC transporter permease protein MJ0087 (349 aa).

9 consecutive transmembrane segments (helical) span residues 15-35 (IIFGIILLITLFLSSIYALCV), 69-89 (IFAAIISGMSLAVAGAVMQCI), 100-120 (MGISHGAMFGACFAIIMFGFG), 135-155 (MITIFAFLGALIGVVVILLLA), 166-186 (ILAGVAMSSLFTAGTMLIQYF), 206-226 (AIWTEIYIMAAVMIPSLIYFM), 254-274 (LIGMLVASLLTSVNVAFLGII), 295-315 (FLIPISALFGAVLLLIADTFA), and 318-338 (IIAPIVLPVGILTSFLGAPMF).

This sequence belongs to the binding-protein-dependent transport system permease family. FecCD subfamily.

It localises to the cell membrane. Functionally, probably part of a binding-protein-dependent transport system. Probably responsible for the translocation of the substrate across the membrane. The sequence is that of Putative ABC transporter permease protein MJ0087 from Methanocaldococcus jannaschii (strain ATCC 43067 / DSM 2661 / JAL-1 / JCM 10045 / NBRC 100440) (Methanococcus jannaschii).